Here is a 269-residue protein sequence, read N- to C-terminus: MSSKINFVKMHGLGNDFVIINKKDLTGTYDLSQLAKSMAKRHLGIGCDQFIIYEEQNDSYEMIIYNIDGSSAKLCGNATRCLAKLIYLDTGKKDITVVVGNKKLLCHVIDENNISVNVGGVSFNESWMPSRDKIWEFAERYMIDLKETICVDVGNPHLVIFSKLELQDQKIVGEKLQDKALFADGVNVNFAEVRDNKIYLSVWERGSGLTLACGSGACGSFAAGLKLGFIHSPCEVVFKHGSLIMKEENGNIIMQGPASLVAKGMYYCE.

The substrate site is built by asparagine 15, glutamine 49, and asparagine 66. Residue cysteine 75 is the Proton donor of the active site. Substrate-binding positions include 76–77 (GN), asparagine 155, asparagine 187, and 204–205 (ER). The active-site Proton acceptor is cysteine 213. A substrate-binding site is contributed by 214 to 215 (GS).

It belongs to the diaminopimelate epimerase family. As to quaternary structure, homodimer.

Its subcellular location is the cytoplasm. The catalysed reaction is (2S,6S)-2,6-diaminopimelate = meso-2,6-diaminopimelate. It participates in amino-acid biosynthesis; L-lysine biosynthesis via DAP pathway; DL-2,6-diaminopimelate from LL-2,6-diaminopimelate: step 1/1. Its function is as follows. Catalyzes the stereoinversion of LL-2,6-diaminopimelate (L,L-DAP) to meso-diaminopimelate (meso-DAP), a precursor of L-lysine and an essential component of the bacterial peptidoglycan. The protein is Diaminopimelate epimerase of Rickettsia bellii (strain OSU 85-389).